The chain runs to 497 residues: tRNA-2-methylthio-N(6)-dimethylallyladenosine synthase (497 aa).

The region spanning 44–161 (KKVFVTTQGC…LPELYDQSHQ (118 aa)) is the MTTase N-terminal domain. C53, C90, C124, C205, C209, and C212 together coordinate [4Fe-4S] cluster. Residues 191 to 423 (RVEGFKAFVS…QKVIIDSTLA (233 aa)) enclose the Radical SAM core domain. Positions 426–494 (HEMVGTTTRV…PHMVKGEIEA (69 aa)) constitute a TRAM domain.

This sequence belongs to the methylthiotransferase family. MiaB subfamily. As to quaternary structure, monomer. [4Fe-4S] cluster serves as cofactor.

The protein resides in the cytoplasm. It catalyses the reaction N(6)-dimethylallyladenosine(37) in tRNA + (sulfur carrier)-SH + AH2 + 2 S-adenosyl-L-methionine = 2-methylsulfanyl-N(6)-dimethylallyladenosine(37) in tRNA + (sulfur carrier)-H + 5'-deoxyadenosine + L-methionine + A + S-adenosyl-L-homocysteine + 2 H(+). Its function is as follows. Catalyzes the methylthiolation of N6-(dimethylallyl)adenosine (i(6)A), leading to the formation of 2-methylthio-N6-(dimethylallyl)adenosine (ms(2)i(6)A) at position 37 in tRNAs that read codons beginning with uridine. The chain is tRNA-2-methylthio-N(6)-dimethylallyladenosine synthase from Psychrobacter cryohalolentis (strain ATCC BAA-1226 / DSM 17306 / VKM B-2378 / K5).